The sequence spans 695 residues: MENVEARYVDLDKLRNIGIMAHIDAGKTTTTERILYYTGRKHFLGDVDEGNTTTDWMPQEKERGITIQSAATTCFWKGYRINIIDTPGHVDFTAEVERALRVLDGAIAVFDATAGVEPQSETVWRQADKYNVPRIAFMNKMDKVGADFYMAVETLVTKLKANPIPVQMPIGSEKDFQGVIDLIKMKAIYWVSEDGSVYEERDIPEELREEAEMRREEMLEKVAELDEEILEKYLEGEEISEEEIKRILRKATIENRAVPVLCGAAKANKGIQPLLDAVIDYLPSPLDLPPVKGWRVSDGEIVYRKPDENEPFTALVFKVQVDPYIGKLVYFRVYSGRLEKGSYVYNSTKGQRERISRIVFMHADKREEVDYVRPGDIAAGVGLKVSQTGDTLCDEKEPVILEKIDFPEPVISLAIEPATKADEEKLVKALLALSEEDPTLQVRVDKETGETIISGMGELHLEIVVDRLKREFGVNVRVGQPQVAYRETIKRPAEAEGKYIRQTGGRGQYGHVILRIEPIPEEEGKNFEFIDKTVGGVIPKEFMPAIEAGIKEAMMSGPLAGYPVVRVRAVVLDGSYHEVDSSEMAFKIAASMAFKEAMKKAQPVLLEPIMKLEITTPEEYMGNIISDLNSRRAKIESLETRGHLKIVVAKIPLSETFGYATVLRSLSQGRASYIMQFSHYQEVPEKIAEKIIKVV.

The region spanning Asp-12–Leu-286 is the tr-type G domain. GTP contacts are provided by residues Ala-21–Thr-28, Asp-85–His-89, and Asn-139–Asp-142.

This sequence belongs to the TRAFAC class translation factor GTPase superfamily. Classic translation factor GTPase family. EF-G/EF-2 subfamily.

Its subcellular location is the cytoplasm. Its function is as follows. Catalyzes the GTP-dependent ribosomal translocation step during translation elongation. During this step, the ribosome changes from the pre-translocational (PRE) to the post-translocational (POST) state as the newly formed A-site-bound peptidyl-tRNA and P-site-bound deacylated tRNA move to the P and E sites, respectively. Catalyzes the coordinated movement of the two tRNA molecules, the mRNA and conformational changes in the ribosome. The chain is Elongation factor G from Thermotoga sp. (strain RQ2).